The chain runs to 761 residues: Hyperosmolality-gated Ca2+ permeable channel 1.6 (761 aa).

Helical transmembrane passes span 7–27, 101–121, 156–176, 375–395, 419–439, 467–487, 512–532, 583–603, 630–650, and 653–673; these read IGVAAAINIVTAFAFLLAFAI, IYLLGLKIFFPIACVAFTTMV, PRFWVHLCMAYAITFWTCFIL, LIVGVAYFFLTFFFMIPIAFV, LLKSIIQGFLPGIALKIFLLF, FYMFQFINVFLGSIVTGTAFQ, ATFFITYIMVDGWAGVAGEIL, AAVSPILLPFILVFFGLAFVV, VVTALVVSQLLLMGLLSTKHA, and STPLLLVLPLLTIGFHKHCKN. Positions 718-731 are enriched in basic and acidic residues; that stretch reads RVGEDPEPEEKLES. The disordered stretch occupies residues 718–761; sequence RVGEDPEPEEKLESDMSPPDLVATKRWSWRNTPLPSKDSCREIP.

This sequence belongs to the CSC1 (TC 1.A.17) family.

The protein resides in the membrane. In terms of biological role, acts as an osmosensitive calcium-permeable cation channel. In Arabidopsis thaliana (Mouse-ear cress), this protein is Hyperosmolality-gated Ca2+ permeable channel 1.6.